A 1364-amino-acid chain; its full sequence is Formin-like protein 6 (1364 aa).

Residues 9-193 (YRKPPDGLLE…HYISRRNVSA (185 aa)) enclose the Phosphatase tensin-type domain. C126 acts as the Phosphocysteine intermediate in catalysis. Positions 199–338 (DRALTLDCVI…FRAEVLFSEM (140 aa)) constitute a C2 tensin-type domain. Disordered regions lie at residues 614-934 (KCTP…NLKP), 976-999 (VLPS…KPEK), and 1317-1364 (EAEA…ASAK). The segment covering 617–631 (PSPPPLLPPLAPVVP) has biased composition (pro residues). Positions 657 to 690 (SFPSLSPTQQKQSTSKLCQTILPTNHQLSSSNIT) are enriched in polar residues. The span at 734 to 743 (PPAPPPPPLQ) shows a compositional bias: pro residues. Over residues 744–757 (SPSTPRCSPVRTLA) the composition is skewed to low complexity. Composition is skewed to pro residues over residues 774–813 (GPPP…PAAP) and 856–865 (PSPPPPPPPC). Residues 916–929 (MSRSLQSGQAASRR) show a composition bias toward polar residues. The FH2 domain maps to 922–1322 (SGQAASRRSN…KALKEAEAEK (401 aa)). Residues 1317–1351 (EAEAEKTKKEPENAQKTKEPGNDKAKHNNSIKELD) show a composition bias toward basic and acidic residues. Positions 1353–1364 (SLQSPAQTASAK) are enriched in polar residues.

This sequence belongs to the formin-like family. Class-II subfamily.

This Oryza sativa subsp. japonica (Rice) protein is Formin-like protein 6 (FH6).